Here is a 563-residue protein sequence, read N- to C-terminus: RUN and FYVE domain-containing protein 4 (563 aa).

The 134-residue stretch at 33–166 folds into the RUN domain; it reads TETSAELHRL…VAFNLDLQRP (134 aa). 2 disordered regions span residues 176 to 327 and 375 to 397; these read SESR…TTEG and KKSS…MQED. 2 stretches are compositionally biased toward basic and acidic residues: residues 196-205 and 263-284; these read GFPEEVRCSR and ETER…RKFL. Residues 285–295 show a composition bias toward polar residues; the sequence is ENSTASIQQQR. Residues 297–312 show a composition bias toward basic and acidic residues; that stretch reads RAKDVKMQLTGRKVEG. Over residues 385-396 the composition is skewed to polar residues; sequence EWTGVTSGTMQE. The stretch at 421–462 forms a coiled coil; it reads QAQCQEQLRAQEAELQALQEQLSRCQKERALLQVKLEQKQQE. Residues 428–558 form an FYVE-type zinc finger; sequence LRAQEAELQA…RCCPTCAQQE (131 aa). Zn(2+) contacts are provided by cysteine 513, cysteine 516, cysteine 529, cysteine 532, cysteine 537, cysteine 540, cysteine 551, and cysteine 554.

In terms of assembly, forms homodimers (via coiled coil domain). Forms a ternary complex with RAB7A and LAMP2; the interaction with RAB7A is mediated by RUFY4 (via RUN and coiled coil domains). Interacts with GTP-, but not GDP-bound ARL8A and ARL8B. Interacts with dynactin/DCTN1 and the dynein intermediate chain DYNC1I1/2. In terms of tissue distribution, expressed in dendritic cells.

The protein resides in the cytoplasmic vesicle. The protein localises to the autophagosome. It is found in the lysosome. In terms of biological role, ARL8 effector that promotes the coupling of endolysosomes to dynein-dynactin for retrograde transport along microtubules. Acts by binding both GTP-bound ARL8 and dynein-dynactin. In nonneuronal cells, promotes concentration of endolysosomes in the juxtanuclear area. In hippocampal neurons, drives retrograde transport of endolysosomes from the axon to the soma. Positive regulator of macroautophagy in dendritic cells. Increases autophagic flux, probably by stimulating both autophagosome formation and facilitating tethering with lysosomes. Binds to phosphatidylinositol 3-phosphate (PtdIns3P) through its FYVE-type zinc finger. Positive regulator of osteosclast bone-resorbing activity, possibly by promoting late endosome-lysosome fusion by acting as an adapter protein between RAB7A on late endosomes and LAMP2 on primary lysosomes. In Mus musculus (Mouse), this protein is RUN and FYVE domain-containing protein 4 (Rufy4).